Consider the following 152-residue polypeptide: Protein IpgF (152 aa).

Positions 1-17 (MSRFVFILLCFIPHLGR) are cleaved as a signal peptide.

This sequence belongs to the IagB/IpgF/P19 family.

In Shigella flexneri, this protein is Protein IpgF (ipgF).